A 344-amino-acid polypeptide reads, in one-letter code: Ketol-acid reductoisomerase (NADP(+)) (344 aa).

The KARI N-terminal Rossmann domain occupies 2–181 (AKVLYEKDIQ…GAARAGVLET (180 aa)). NADP(+) is bound by residues 25–28 (YGSQ), Arg48, Ser52, and 82–85 (DEMQ). His107 is a catalytic residue. Gly133 contacts NADP(+). Positions 182–327 (SFQEETETDL…RELRELMPFV (146 aa)) constitute a KARI C-terminal knotted domain. Mg(2+) contacts are provided by Asp190, Glu194, Glu226, and Glu230. Ser251 contacts substrate.

This sequence belongs to the ketol-acid reductoisomerase family. Mg(2+) serves as cofactor.

The enzyme catalyses (2R)-2,3-dihydroxy-3-methylbutanoate + NADP(+) = (2S)-2-acetolactate + NADPH + H(+). The catalysed reaction is (2R,3R)-2,3-dihydroxy-3-methylpentanoate + NADP(+) = (S)-2-ethyl-2-hydroxy-3-oxobutanoate + NADPH + H(+). It functions in the pathway amino-acid biosynthesis; L-isoleucine biosynthesis; L-isoleucine from 2-oxobutanoate: step 2/4. Its pathway is amino-acid biosynthesis; L-valine biosynthesis; L-valine from pyruvate: step 2/4. Involved in the biosynthesis of branched-chain amino acids (BCAA). Catalyzes an alkyl-migration followed by a ketol-acid reduction of (S)-2-acetolactate (S2AL) to yield (R)-2,3-dihydroxy-isovalerate. In the isomerase reaction, S2AL is rearranged via a Mg-dependent methyl migration to produce 3-hydroxy-3-methyl-2-ketobutyrate (HMKB). In the reductase reaction, this 2-ketoacid undergoes a metal-dependent reduction by NADPH to yield (R)-2,3-dihydroxy-isovalerate. This Oceanobacillus iheyensis (strain DSM 14371 / CIP 107618 / JCM 11309 / KCTC 3954 / HTE831) protein is Ketol-acid reductoisomerase (NADP(+)).